Reading from the N-terminus, the 249-residue chain is 5'-nucleotidase SurE (249 aa).

A divalent metal cation is bound by residues D8, D9, S39, and N91.

Belongs to the SurE nucleotidase family. The cofactor is a divalent metal cation.

It localises to the cytoplasm. The catalysed reaction is a ribonucleoside 5'-phosphate + H2O = a ribonucleoside + phosphate. Functionally, nucleotidase that shows phosphatase activity on nucleoside 5'-monophosphates. This Pseudomonas syringae pv. syringae (strain B728a) protein is 5'-nucleotidase SurE.